Reading from the N-terminus, the 345-residue chain is Large ribosomal subunit protein uL10 (345 aa).

Positions 303-345 (SLPQTAAPQQTPQPTEAPKEEAQEEKKEGPSEEEIAGSLASLF) are disordered. Low complexity predominate over residues 305–318 (PQTAAPQQTPQPTE). Over residues 319–332 (APKEEAQEEKKEGP) the composition is skewed to basic and acidic residues.

The protein belongs to the universal ribosomal protein uL10 family. Part of the 50S ribosomal subunit. Forms part of the ribosomal stalk which helps the ribosome interact with GTP-bound translation factors. Forms a heptameric L10(L12)2(L12)2(L12)2 complex, where L10 forms an elongated spine to which the L12 dimers bind in a sequential fashion.

Forms part of the ribosomal stalk, playing a central role in the interaction of the ribosome with GTP-bound translation factors. The polypeptide is Large ribosomal subunit protein uL10 (Pyrobaculum aerophilum (strain ATCC 51768 / DSM 7523 / JCM 9630 / CIP 104966 / NBRC 100827 / IM2)).